A 610-amino-acid chain; its full sequence is UvrABC system protein C (610 aa).

The region spanning 16 to 94 (SQPGVYSMYD…IKLYQPRYNV (79 aa)) is the GIY-YIG domain. In terms of domain architecture, UVR spans 204–239 (QQVLNQLVERMELASRALNFEDAAHARDQIQAVRRV).

The protein belongs to the UvrC family. As to quaternary structure, interacts with UvrB in an incision complex.

It is found in the cytoplasm. In terms of biological role, the UvrABC repair system catalyzes the recognition and processing of DNA lesions. UvrC both incises the 5' and 3' sides of the lesion. The N-terminal half is responsible for the 3' incision and the C-terminal half is responsible for the 5' incision. The polypeptide is UvrABC system protein C (Sodalis glossinidius (strain morsitans)).